Consider the following 205-residue polypeptide: Adenylyl-sulfate kinase (205 aa).

31-38 (GLSGSGKS) contributes to the ATP binding site. Ser105 serves as the catalytic Phosphoserine intermediate.

This sequence belongs to the APS kinase family.

The enzyme catalyses adenosine 5'-phosphosulfate + ATP = 3'-phosphoadenylyl sulfate + ADP + H(+). It participates in sulfur metabolism; hydrogen sulfide biosynthesis; sulfite from sulfate: step 2/3. Catalyzes the synthesis of activated sulfate. This Shewanella halifaxensis (strain HAW-EB4) protein is Adenylyl-sulfate kinase.